The sequence spans 281 residues: ATP phosphoribosyltransferase (281 aa).

It belongs to the ATP phosphoribosyltransferase family. Long subfamily. Mg(2+) serves as cofactor.

The protein resides in the cytoplasm. The enzyme catalyses 1-(5-phospho-beta-D-ribosyl)-ATP + diphosphate = 5-phospho-alpha-D-ribose 1-diphosphate + ATP. It participates in amino-acid biosynthesis; L-histidine biosynthesis; L-histidine from 5-phospho-alpha-D-ribose 1-diphosphate: step 1/9. Its activity is regulated as follows. Feedback inhibited by histidine. Catalyzes the condensation of ATP and 5-phosphoribose 1-diphosphate to form N'-(5'-phosphoribosyl)-ATP (PR-ATP). Has a crucial role in the pathway because the rate of histidine biosynthesis seems to be controlled primarily by regulation of HisG enzymatic activity. In Kocuria rhizophila (strain ATCC 9341 / DSM 348 / NBRC 103217 / DC2201), this protein is ATP phosphoribosyltransferase.